The sequence spans 318 residues: Acetyl-coenzyme A carboxylase carboxyl transferase subunit alpha (318 aa).

The CoA carboxyltransferase C-terminal domain maps to 31–292 (DLIKEVSALE…KDAILRQLEL (262 aa)).

Belongs to the AccA family. Acetyl-CoA carboxylase is a heterohexamer composed of biotin carboxyl carrier protein (AccB), biotin carboxylase (AccC) and two subunits each of ACCase subunit alpha (AccA) and ACCase subunit beta (AccD).

Its subcellular location is the cytoplasm. It carries out the reaction N(6)-carboxybiotinyl-L-lysyl-[protein] + acetyl-CoA = N(6)-biotinyl-L-lysyl-[protein] + malonyl-CoA. Its pathway is lipid metabolism; malonyl-CoA biosynthesis; malonyl-CoA from acetyl-CoA: step 1/1. Component of the acetyl coenzyme A carboxylase (ACC) complex. First, biotin carboxylase catalyzes the carboxylation of biotin on its carrier protein (BCCP) and then the CO(2) group is transferred by the carboxyltransferase to acetyl-CoA to form malonyl-CoA. This is Acetyl-coenzyme A carboxylase carboxyl transferase subunit alpha from Hydrogenovibrio crunogenus (strain DSM 25203 / XCL-2) (Thiomicrospira crunogena).